We begin with the raw amino-acid sequence, 503 residues long: Alpha-1-syntrophin (503 aa).

2 consecutive PH domains span residues 6-263 (RAPR…AQIG) and 287-399 (DIKQ…DGCH). The segment at 40–68 (LTVSPADGEPGPEPEPAQLNGAAEPGAAP) is disordered. Residues 81–164 (RVTVRKADAG…EVVLEVKYMK (84 aa)) enclose the PDZ domain. A phosphoserine mark is found at serine 95, serine 178, serine 183, serine 187, and serine 194. The segment at 177–203 (TSVGWDSPPASPLQRQPSSPGPQPRNL) is disordered. Residues 447–503 (PFEKLQMSSDDGTSLLFLDFGGAEGEIQLDLHSCPKTMVFIIHSFLSAKVTRLGLLA) enclose the SU domain. The interval 481-503 (PKTMVFIIHSFLSAKVTRLGLLA) is calmodulin-binding.

It belongs to the syntrophin family. As to quaternary structure, monomer and homodimer. Interacts with MAPK12, TGFA, GA and F-actin. Interacts with the other members of the syntrophin family: SNTB1 and SNTB2; with dystrophin protein DMD and related proteins DTNA and UTRN; SGCG and SGCA of the dystrophin glycoprotein complex; NOS1; GRB2; calmodulin and the sodium channel proteins SCN4A and SCN5A. Interacts with MYOC; regulates muscle hypertrophy. Interacts with DTNB. Phosphorylated by CaM-kinase II. Phosphorylation may inhibit the interaction with DMD. As to expression, high expression in skeletal muscle. Expressed at intermediate level in heart, kidney and brain, and at low level in intestine, liver, lung and testis.

It localises to the cell membrane. It is found in the sarcolemma. The protein localises to the cell junction. Its subcellular location is the cytoplasm. The protein resides in the cytoskeleton. Adapter protein that binds to and probably organizes the subcellular localization of a variety of membrane proteins. May link various receptors to the actin cytoskeleton and the extracellular matrix via the dystrophin glycoprotein complex. Plays an important role in synapse formation and in the organization of UTRN and acetylcholine receptors at the neuromuscular synapse. Binds to phosphatidylinositol 4,5-bisphosphate. The chain is Alpha-1-syntrophin (Snta1) from Mus musculus (Mouse).